The sequence spans 357 residues: Dynein axonemal assembly factor 10 (357 aa).

WD repeat units lie at residues 80–127, 132–170, 184–223, and 277–321; these read EFTN…IPIW, AHQG…NSAN, EQTN…IQST, and EPNQ…IDKV.

Interacts with PIH1D1; the interaction associates DNAAF10 with the R2TP complex. Interacts with several dynein axonemal assembly factors.

It is found in the dynein axonemal particle. Its function is as follows. Key assembly factor specifically required for the stability of axonemal dynein heavy chains in cytoplasm. The polypeptide is Dynein axonemal assembly factor 10 (dnaaf10) (Dictyostelium discoideum (Social amoeba)).